The primary structure comprises 489 residues: WPP domain-interacting protein 1 (489 aa).

A disordered region spans residues 49-73; sequence SNSVELGKPMSFDSPGDGGGAYSPV. 3 short sequence motifs (nuclear localization signal) span residues 80–81, 83–84, and 104–105; these read RK, RR, and KR. Residues 195–264 form a disordered region; sequence PMISSGQGGN…DDAGGEGGES (70 aa). A compositionally biased stretch (basic and acidic residues) spans 215-224; the sequence is GESVDFEKEN. A coiled-coil region spans residues 323–446; the sequence is EIVTLVNNVE…QDLQNDCIEI (124 aa). The 31-residue stretch at 459–489 folds into the KASH domain; that stretch reads SYVLIQLVLLSTVVLLLLSQLLPEPDTVVPT. Residues 460 to 480 form a helical membrane-spanning segment; it reads YVLIQLVLLSTVVLLLLSQLL.

In terms of assembly, homodimer and heterodimer with WIP2. Component of Ran complexes at least composed of WIT1 or WIT2, RANGAP1 or RANGAP2, and WIP1 or WIP2 or WIP3. Interacts with RANGAP1, RANGAP2, WPP1/MAF1, and WPP2/MAF2. Interacts with SUN1 and SUN2. Interacts with KIN1. Core component of the LINC complex which is composed of inner nuclear membrane SUN domain-containing proteins coupled to outer nuclear membrane WIP and WIT proteins. The LINC complex also involves nucleoskeletal proteins CRWN/LINC and possibly KAKU4 and the cytoskeletal myosin KAKU1. Interacts with WIT1 and SUN2. Interacts with WIT2. Interacts with SUN3. As to expression, expressed in seedlings, roots, stems, leaves, and flowers.

It is found in the nucleus envelope. The protein resides in the nucleus membrane. Its function is as follows. Mediates and enhances the nuclear envelope docking of RANGAP proteins mediated by WIT1 and WIT2 in the undifferentiated cells of root tips. As component of the SUN-WIP-WIT2-KAKU1 complex, mediates the transfer of cytoplasmic forces to the nuclear envelope (NE), leading to nuclear shape changes. This is WPP domain-interacting protein 1 (WIP1) from Arabidopsis thaliana (Mouse-ear cress).